Consider the following 383-residue polypeptide: Ceramide synthase 3 (383 aa).

A helical membrane pass occupies residues 32-52; that stretch reads VFVKASHLYITIPYAFLLMVV. The segment at 66 to 127 is homeobox-like; the sequence is NALGIKKTQH…RIRQKQNKPC (62 aa). In terms of domain architecture, TLC spans 130–331; that stretch reads QKFQESCWRF…ILKMLNRCIF (202 aa). Helical transmembrane passes span 139-159, 174-194, 205-225, 263-283, and 302-322; these read FTFY…KPWA, LLPS…SLVF, FLAH…SWCA, LFFI…PFWI, and IFLN…GYFI. Residues 323 to 383 are Cytoplasmic-facing; that stretch reads LKMLNRCIFT…HLIANGQHGR (61 aa). S340 is modified (phosphoserine). A disordered region spans residues 340 to 383; sequence SDNEEEEEEEEEEEAESTKGKETEYLKNGLGTNRHLIANGQHGR. Residues 342–354 show a composition bias toward acidic residues; it reads NEEEEEEEEEEEA. The segment covering 355-364 has biased composition (basic and acidic residues); sequence ESTKGKETEY.

As to expression, predominantly expressed in testis. In skin, present in the upper stratum spinosum and stratum granulosum (at protein level).

It localises to the endoplasmic reticulum membrane. It catalyses the reaction a very long-chain fatty acyl-CoA + a sphingoid base = an N-(very-long-chain fatty acyl)-sphingoid base + CoA + H(+). The enzyme catalyses docosanoyl-CoA + sphinganine = N-docosanoylsphinganine + CoA + H(+). It carries out the reaction tetracosanoyl-CoA + sphinganine = N-tetracosanoylsphinganine + CoA + H(+). The catalysed reaction is hexacosanoyl-CoA + sphinganine = N-hexacosanoylsphinganine + CoA + H(+). It catalyses the reaction 2-hydroxydocosanoyl-CoA + sphinganine = N-(2-hydroxydocosanoyl)-sphinganine + CoA + H(+). The enzyme catalyses 2-hydroxytetracosanoyl-CoA + sphinganine = N-(2-hydroxytetracosanoyl)-sphinganine + CoA + H(+). It carries out the reaction an ultra-long-chain fatty acyl-CoA + a sphingoid base = an N-(ultra-long-chain-acyl)-sphingoid base + CoA + H(+). The catalysed reaction is octacosanoyl-CoA + sphinganine = N-(octacosanoyl)-sphinganine + CoA + H(+). It catalyses the reaction a fatty acyl-CoA + sphing-4-enine = an N-acylsphing-4-enine + CoA + H(+). The enzyme catalyses sphinganine + octadecanoyl-CoA = N-(octadecanoyl)-sphinganine + CoA + H(+). It carries out the reaction 2-hydroxyoctadecanoyl-CoA + sphinganine = N-(2-hydroxyoctadecanoyl)-sphinganine + CoA + H(+). Its pathway is lipid metabolism; sphingolipid metabolism. Its function is as follows. Ceramide synthase that catalyzes the transfer of the acyl chain from acyl-CoA to a sphingoid base, with high selectivity toward very- and ultra-long-chain fatty acyl-CoA (chain length greater than C22). N-acylates sphinganine and sphingosine bases to form dihydroceramides and ceramides in de novo synthesis and salvage pathways, respectively. It is crucial for the synthesis of ultra-long-chain ceramides in the epidermis, to maintain epidermal lipid homeostasis and terminal differentiation. In Mus musculus (Mouse), this protein is Ceramide synthase 3.